Here is an 891-residue protein sequence, read N- to C-terminus: MITIIWSLCLIFCLSNSILVIAKDLCLPDQRDALLEFKNEFSIPSPDSDLMLILQTTAKWRNNTDCCSWGGISCDPKTGVVVELDLGNSDLNGRLRSNSSLFRLQHLQSLDLSYNDLSCTLPDSSGNFKYLRVLNLLGCNLFGEIPTSLRSLSYLTDLDLSYNDDLTGEILDSMGNLKHLRVLSLTSCKFTGKIPSSLGNLTYLTDLDLSWNYFTGELPDSMGNLKSLRVLNLHRCNFFGKIPTSLGSLSNLTDLDISKNEFTSEGPDSMSSLNRLTDFQLMLLNLSSLTNVDLSSNQFKAMLPSNMSSLSKLEAFDISGNSFSGTIPSSLFMLPSLIKLDLGTNDFSGPLKIGNISSPSNLQELYIGENNINGPIPRSILKLVGLSALSLSFWDTGGIVDFSIFLQLKSLRSLDLSGINLNISSSHHLPSHMMHLILSSCNISQFPKFLENQTSLYHLDISANQIEGQVPEWLWRLPTLRYVNIAQNAFSGELTMLPNPIYSFIASDNKFSGEIPRAVCEIGTLVLSNNNFSGSIPPCFEISNKTLSILHLRNNSLSGVIPEESLHGYLRSLDVGSNRLSGQFPKSLINCSYLQFLNVEENRINDTFPSWLKSLPNLQLLVLRSNEFHGPIFSPGDSLSFSKLRFFDISENRFSGVLPSDYFVGWSVMSSFVDIIDNTPGFTVVGDDQESFHKSVVLTIKGLNMELVGSGFEIYKTIDVSGNRLEGDIPESIGILKELIVLNMSNNAFTGHIPPSLSNLSNLQSLDLSQNRLSGSIPGELGELTFLARMNFSYNMLEGPIPQGTQIQSQNSSSFAENPGLCGAPLQKKCGGEEEEDKEKEEKDKGLSWVAAAIGYVPGLFCGLAIGHILTSYKRDWFMRIFSCFSSPLKK.

The first 22 residues, 1–22, serve as a signal peptide directing secretion; it reads MITIIWSLCLIFCLSNSILVIA. Over 23–849 the chain is Extracellular; sequence KDLCLPDQRD…KEEKDKGLSW (827 aa). Asn62 and Asn98 each carry an N-linked (GlcNAc...) asparagine glycan. 7 LRR repeats span residues 105–130, 132–152, 153–176, 177–201, 203–225, 226–249, and 250–272; these read QHLQ…NFKY, RVLN…LRSL, SYLT…SMGN, LKHL…LGNL, YLTD…MGNL, KSLR…LGSL, and SNLT…SMSS. Asn200 carries an N-linked (GlcNAc...) asparagine glycan. Residues Asn251, Asn285, and Asn306 are each glycosylated (N-linked (GlcNAc...) asparagine). LRR repeat units follow at residues 286 to 309, 310 to 334, 336 to 358, and 359 to 383; these read LSSL…NMSS, LSKL…LFML, SLIK…NISS, and PSNL…ILKL. Asn355 carries an N-linked (GlcNAc...) asparagine glycan. The LRR 12; degenerate repeat unit spans residues 384–407; it reads VGLSALSLSFWDTGGIVDFSIFLQ. 15 LRR repeats span residues 408–436, 438–453, 454–477, 478–504, 506–519, 520–544, 545–568, 570–591, 593–614, 615–641, 642–665, 712–736, 737–760, 761–784, and 786–809; these read LKSL…MMHL, LSSC…LENQ, TSLY…LWRL, PTLR…IYSF, ASDN…PRAV, CEIG…EISN, KTLS…SLHG, LRSL…LINC, YLQF…WLKS, LPNL…SLSF, SKLR…YFVG, FEIY…IGIL, KELI…LSNL, SNLQ…LGEL, and FLAR…QIQS. 3 N-linked (GlcNAc...) asparagine glycosylation sites follow: Asn422, Asn442, and Asn452. Residues Asn531, Asn544, Asn554, Asn590, and Asn605 are each glycosylated (N-linked (GlcNAc...) asparagine). N-linked (GlcNAc...) asparagine glycans are attached at residues Asn743 and Asn759. N-linked (GlcNAc...) asparagine glycosylation is found at Asn791 and Asn811. Residues 850 to 870 form a helical membrane-spanning segment; it reads VAAAIGYVPGLFCGLAIGHIL. Residues 871–891 lie on the Cytoplasmic side of the membrane; sequence TSYKRDWFMRIFSCFSSPLKK.

The protein belongs to the RLP family.

The protein localises to the cell membrane. This Arabidopsis thaliana (Mouse-ear cress) protein is Receptor-like protein 50.